Consider the following 322-residue polypeptide: 4-hydroxy-3-methylbut-2-enyl diphosphate reductase 1 (322 aa).

Cys-18 is a binding site for [4Fe-4S] cluster. (2E)-4-hydroxy-3-methylbut-2-enyl diphosphate contacts are provided by His-47 and His-82. Dimethylallyl diphosphate is bound by residues His-47 and His-82. Residues His-47 and His-82 each coordinate isopentenyl diphosphate. Position 104 (Cys-104) interacts with [4Fe-4S] cluster. Residue His-132 coordinates (2E)-4-hydroxy-3-methylbut-2-enyl diphosphate. His-132 contacts dimethylallyl diphosphate. His-132 serves as a coordination point for isopentenyl diphosphate. Glu-134 functions as the Proton donor in the catalytic mechanism. Residue Thr-173 participates in (2E)-4-hydroxy-3-methylbut-2-enyl diphosphate binding. Cys-203 lines the [4Fe-4S] cluster pocket. The (2E)-4-hydroxy-3-methylbut-2-enyl diphosphate site is built by Ser-231, Ser-232, Asn-233, and Ser-276. Dimethylallyl diphosphate is bound by residues Ser-231, Ser-232, Asn-233, and Ser-276. Isopentenyl diphosphate contacts are provided by Ser-231, Ser-232, Asn-233, and Ser-276.

Belongs to the IspH family. The cofactor is [4Fe-4S] cluster.

It catalyses the reaction isopentenyl diphosphate + 2 oxidized [2Fe-2S]-[ferredoxin] + H2O = (2E)-4-hydroxy-3-methylbut-2-enyl diphosphate + 2 reduced [2Fe-2S]-[ferredoxin] + 2 H(+). The catalysed reaction is dimethylallyl diphosphate + 2 oxidized [2Fe-2S]-[ferredoxin] + H2O = (2E)-4-hydroxy-3-methylbut-2-enyl diphosphate + 2 reduced [2Fe-2S]-[ferredoxin] + 2 H(+). Its pathway is isoprenoid biosynthesis; dimethylallyl diphosphate biosynthesis; dimethylallyl diphosphate from (2E)-4-hydroxy-3-methylbutenyl diphosphate: step 1/1. It participates in isoprenoid biosynthesis; isopentenyl diphosphate biosynthesis via DXP pathway; isopentenyl diphosphate from 1-deoxy-D-xylulose 5-phosphate: step 6/6. Catalyzes the conversion of 1-hydroxy-2-methyl-2-(E)-butenyl 4-diphosphate (HMBPP) into a mixture of isopentenyl diphosphate (IPP) and dimethylallyl diphosphate (DMAPP). Acts in the terminal step of the DOXP/MEP pathway for isoprenoid precursor biosynthesis. This Bradyrhizobium diazoefficiens (strain JCM 10833 / BCRC 13528 / IAM 13628 / NBRC 14792 / USDA 110) protein is 4-hydroxy-3-methylbut-2-enyl diphosphate reductase 1.